A 260-amino-acid polypeptide reads, in one-letter code: NAD-capped RNA hydrolase NudC (260 aa).

R74 provides a ligand contact to substrate. 4 residues coordinate Zn(2+): C103, C106, C121, and C124. Y129 lines the substrate pocket. Positions 130–253 (PRIFPCIIVA…TIARALIEQT (124 aa)) constitute a Nudix hydrolase domain. Residues A163, E179, and E183 each coordinate a divalent metal cation. The Nudix box signature appears at 164–185 (GFLEAGETLEDCVAREVHEETG). 197-204 (QPWAFPSS) is a substrate binding site. E224 contributes to the a divalent metal cation binding site. A246 lines the substrate pocket.

This sequence belongs to the Nudix hydrolase family. NudC subfamily. In terms of assembly, homodimer. Mg(2+) is required as a cofactor. It depends on Mn(2+) as a cofactor. The cofactor is Zn(2+).

The catalysed reaction is a 5'-end NAD(+)-phospho-ribonucleoside in mRNA + H2O = a 5'-end phospho-adenosine-phospho-ribonucleoside in mRNA + beta-nicotinamide D-ribonucleotide + 2 H(+). It carries out the reaction NAD(+) + H2O = beta-nicotinamide D-ribonucleotide + AMP + 2 H(+). The enzyme catalyses NADH + H2O = reduced beta-nicotinamide D-ribonucleotide + AMP + 2 H(+). Functionally, mRNA decapping enzyme that specifically removes the nicotinamide adenine dinucleotide (NAD) cap from a subset of mRNAs by hydrolyzing the diphosphate linkage to produce nicotinamide mononucleotide (NMN) and 5' monophosphate mRNA. The NAD-cap is present at the 5'-end of some mRNAs and stabilizes RNA against 5'-processing. Has preference for mRNAs with a 5'-end purine. Catalyzes the hydrolysis of a broad range of dinucleotide pyrophosphates. The protein is NAD-capped RNA hydrolase NudC of Vibrio parahaemolyticus serotype O3:K6 (strain RIMD 2210633).